The chain runs to 260 residues: Phosphate import ATP-binding protein PstB 1 (260 aa).

In terms of domain architecture, ABC transporter spans 8–255 (TETKNVYDVL…PEHKRTEDYV (248 aa)). 46-53 (GPSGCGKS) lines the ATP pocket.

Belongs to the ABC transporter superfamily. Phosphate importer (TC 3.A.1.7) family. In terms of assembly, the complex is composed of two ATP-binding proteins (PstB), two transmembrane proteins (PstC and PstA) and a solute-binding protein (PstS).

It localises to the cell membrane. The catalysed reaction is phosphate(out) + ATP + H2O = ADP + 2 phosphate(in) + H(+). Its function is as follows. Part of the ABC transporter complex PstSACB involved in phosphate import. Responsible for energy coupling to the transport system. The polypeptide is Phosphate import ATP-binding protein PstB 1 (Shouchella clausii (strain KSM-K16) (Alkalihalobacillus clausii)).